The chain runs to 453 residues: Secreted triacylglycerol lipase LIP3 (453 aa).

The signal sequence occupies residues 1–19 (MKLGIVAFTLISFAAQALA). N98 carries an N-linked (GlcNAc...) asparagine glycan. A disulfide bond links C115 and C284. S197 acts as the Nucleophile in catalysis. A glycan (N-linked (GlcNAc...) asparagine) is linked at N230. Residues D344 and H378 contribute to the active site. C360 and C406 are oxidised to a cystine.

It belongs to the AB hydrolase superfamily. Lipase family. Class Lip subfamily.

Its subcellular location is the secreted. It localises to the cell wall. It carries out the reaction a triacylglycerol + H2O = a diacylglycerol + a fatty acid + H(+). The catalysed reaction is a monoacylglycerol + H2O = glycerol + a fatty acid + H(+). It catalyses the reaction a diacylglycerol + H2O = a monoacylglycerol + a fatty acid + H(+). Functionally, secreted lipase involved in Dandruff and seborrheic dermatitis (D/SD) probably via lipase-mediated breakdown of sebaceous lipids and release of irritating free fatty acids. Has triacylglycerol lipase activity and is able to hydrolyze triolein, tristearin, trilinolein, tripalmitoylglycerol and trihexadecenoin. Hydrolyzes diacylglycerols such as distearin, dilinolein, dipalmitoylglycerol and dipalmitolein. Mostly converts monoolein to di- and triolein, while free fatty acids are only produced in low amounts. The chain is Secreted triacylglycerol lipase LIP3 from Malassezia globosa (strain ATCC MYA-4612 / CBS 7966) (Dandruff-associated fungus).